A 35-amino-acid polypeptide reads, in one-letter code: Cytochrome c-550 (35 aa).

Heme c contacts are provided by Cys-17, Cys-20, and His-21.

Binds 1 heme c group covalently per subunit.

Monoheme cytochrome which functions as an electron carrier in the reduction of nitrite by membrane vesicles. This is Cytochrome c-550 from Virgibacillus halodenitrificans (Bacillus halodenitrificans).